The chain runs to 316 residues: tRNA dimethylallyltransferase (316 aa).

14-21 contributes to the ATP binding site; that stretch reads GPTAVGKT. 16–21 is a binding site for substrate; that stretch reads TAVGKT. The interval 39 to 42 is interaction with substrate tRNA; that stretch reads DSMQ.

This sequence belongs to the IPP transferase family. As to quaternary structure, monomer. The cofactor is Mg(2+).

It catalyses the reaction adenosine(37) in tRNA + dimethylallyl diphosphate = N(6)-dimethylallyladenosine(37) in tRNA + diphosphate. Its function is as follows. Catalyzes the transfer of a dimethylallyl group onto the adenine at position 37 in tRNAs that read codons beginning with uridine, leading to the formation of N6-(dimethylallyl)adenosine (i(6)A). In Bacillus cytotoxicus (strain DSM 22905 / CIP 110041 / 391-98 / NVH 391-98), this protein is tRNA dimethylallyltransferase.